A 294-amino-acid polypeptide reads, in one-letter code: Elongation factor Ts (294 aa).

An involved in Mg(2+) ion dislocation from EF-Tu region spans residues 79-82 (TDFV).

It belongs to the EF-Ts family.

The protein resides in the cytoplasm. Its function is as follows. Associates with the EF-Tu.GDP complex and induces the exchange of GDP to GTP. It remains bound to the aminoacyl-tRNA.EF-Tu.GTP complex up to the GTP hydrolysis stage on the ribosome. This chain is Elongation factor Ts (tsf), found in Geobacillus kaustophilus (strain HTA426).